Reading from the N-terminus, the 75-residue chain is MFTMKKSLLFLFFLGTISLSFCEEERSADEDDEGEMTEEEKRSIRDKIKTMAIDLAKSAGTGVLKTLICKLDKSC.

The first 22 residues, 1 to 22 (MFTMKKSLLFLFFLGTISLSFC), serve as a signal peptide directing secretion. Positions 23–40 (EEERSADEDDEGEMTEEE) are excised as a propeptide.

Expressed by the skin glands.

It localises to the secreted. Has antimicrobial activity against Gram-positive bacteria S.aureus ATCC 2592 (MIC=10.0 uM), S.aureus ATCC 43300 (MIC=15.0 uM) and B.subtilis (MIC=40.0 uM), against Gram-negative bacteria E.coli ML-35P (MIC=10.0 uM), P.aeruginosa PA01 (MIC=5.0 uM) and P.aeruginosa ATCC 27853 (MIC=5.0 uM) and against fungus C.albicans ATCC 2002 (MIC=10.0 uM). This chain is Rugosin-LK1, found in Limnonectes kuhlii (Kuhl's Creek frog).